Consider the following 472-residue polypeptide: F420-non-reducing hydrogenase subunit A (472 aa).

Residues C61, C64, C442, and C445 each coordinate Ni(2+).

It belongs to the [NiFe]/[NiFeSe] hydrogenase large subunit family. In terms of assembly, the F420-non-reducing hydrogenase is composed of three subunits; MvhA, MvhD and MvhG. It forms a complex with the heterodisulfide reductase (hdr). Ni(2+) is required as a cofactor.

Functionally, part of a complex that provides reducing equivalents for heterodisulfide reductase. The protein is F420-non-reducing hydrogenase subunit A (mvhA) of Methanothermobacter thermautotrophicus (strain ATCC 29096 / DSM 1053 / JCM 10044 / NBRC 100330 / Delta H) (Methanobacterium thermoautotrophicum).